Consider the following 232-residue polypeptide: Ribose-5-phosphate isomerase A (232 aa).

Residues 31-34 (TGST), 87-90 (DGAD), and 100-103 (KGGG) each bind substrate. The Proton acceptor role is filled by Glu-109. Substrate is bound at residue Lys-127.

It belongs to the ribose 5-phosphate isomerase family. Homodimer.

It carries out the reaction aldehydo-D-ribose 5-phosphate = D-ribulose 5-phosphate. It participates in carbohydrate degradation; pentose phosphate pathway; D-ribose 5-phosphate from D-ribulose 5-phosphate (non-oxidative stage): step 1/1. Its function is as follows. Catalyzes the reversible conversion of ribose-5-phosphate to ribulose 5-phosphate. The polypeptide is Ribose-5-phosphate isomerase A (Bifidobacterium adolescentis (strain ATCC 15703 / DSM 20083 / NCTC 11814 / E194a)).